The primary structure comprises 352 residues: tRNA pseudouridine synthase D (352 aa).

Catalysis depends on aspartate 78, which acts as the Nucleophile. In terms of domain architecture, TRUD spans 153-299 (GVPNYYGEQR…LDQDRRPLLL (147 aa)).

Belongs to the pseudouridine synthase TruD family.

It catalyses the reaction uridine(13) in tRNA = pseudouridine(13) in tRNA. Responsible for synthesis of pseudouridine from uracil-13 in transfer RNAs. The polypeptide is tRNA pseudouridine synthase D (Aeromonas hydrophila subsp. hydrophila (strain ATCC 7966 / DSM 30187 / BCRC 13018 / CCUG 14551 / JCM 1027 / KCTC 2358 / NCIMB 9240 / NCTC 8049)).